The following is a 112-amino-acid chain: Chaperone NapD (112 aa).

It belongs to the NapD family. In terms of assembly, interacts with the cytoplasmic NapA precursor.

Its subcellular location is the cytoplasm. Chaperone for NapA, the catalytic subunit of the periplasmic nitrate reductase. It binds directly and specifically to the twin-arginine signal peptide of NapA, preventing premature interaction with the Tat translocase and premature export. The sequence is that of Chaperone NapD from Paracoccus pantotrophus (Thiosphaera pantotropha).